A 508-amino-acid chain; its full sequence is WD repeat-containing protein DDB_G0290555 (508 aa).

WD repeat units follow at residues 32–74, 159–198, 252–292, and 295–334; these read TSEL…LIGE, NVAT…KTYS, FSKH…QVGS, and DSAG…MLHK. The disordered stretch occupies residues 368 to 508; sequence ENKNRINNDD…KKFAGLKKRK (141 aa). Acidic residues predominate over residues 399–435; that stretch reads MDSDDDIEDGDDNDVEFPMEADSDDSDFDLGNSDDDN. A compositionally biased stretch (basic and acidic residues) spans 436-446; sequence ISVKKENKGDS. The span at 447–456 shows a compositional bias: acidic residues; sequence DDSDDDSDED. Residues 471–493 show a composition bias toward low complexity; that stretch reads NNNNNNNKGKNNKGKNNSSTKKT. Residues 497–508 show a composition bias toward basic residues; it reads LKKKFAGLKKRK.

In Dictyostelium discoideum (Social amoeba), this protein is WD repeat-containing protein DDB_G0290555.